Consider the following 112-residue polypeptide: Nucleoid-associated protein FTM_1023 (112 aa).

The protein belongs to the YbaB/EbfC family. As to quaternary structure, homodimer.

The protein resides in the cytoplasm. It localises to the nucleoid. Binds to DNA and alters its conformation. May be involved in regulation of gene expression, nucleoid organization and DNA protection. In Francisella tularensis subsp. mediasiatica (strain FSC147), this protein is Nucleoid-associated protein FTM_1023.